Consider the following 173-residue polypeptide: Alpha-crystallin A chain (173 aa).

Met-1 is subject to N-acetylmethionine. The tract at residues 1-63 (MDIAIQHPWF…RSVLDSGISE (63 aa)) is required for complex formation with BFSP1 and BFSP2. Gln-6 carries the deamidated glutamine; partial modification. Ser-45 is subject to Phosphoserine. Deamidated glutamine; partial is present on Gln-50. Residues 52 to 162 (VFRSVLDSGI…GHSERAIPVS (111 aa)) form the sHSP domain. N6-acetyllysine is present on residues Lys-70 and Lys-99. Zn(2+) is bound at residue His-100. Asn-101 is modified (deamidated asparagine; partial). Positions 102 and 107 each coordinate Zn(2+). Ser-122 is subject to Phosphoserine. A Deamidated asparagine; partial modification is found at Asn-123. The segment at 144–173 (PKVPSGVDAGHSERAIPVSREEKPSSAPSS) is disordered. Over residues 153-167 (GHSERAIPVSREEKP) the composition is skewed to basic and acidic residues. Residue His-154 coordinates Zn(2+). An O-linked (GlcNAc) serine glycan is attached at Ser-162.

This sequence belongs to the small heat shock protein (HSP20) family. Heteromer composed of three CRYAA and one CRYAB subunits. Inter-subunit bridging via zinc ions enhances stability, which is crucial as there is no protein turn over in the lens. Can also form homodimers and homotetramers (dimers of dimers) which serve as the building blocks of homooligomers. Within homooligomers, the zinc-binding motif is created from residues of 3 different molecules. His-100 and Glu-102 from one molecule are ligands of the zinc ion, and His-107 and His-154 residues from additional molecules complete the site with tetrahedral coordination geometry. Part of a complex required for lens intermediate filament formation composed of BFSP1, BFSP2 and CRYAA. Acetylation at Lys-70 may increase chaperone activity. In terms of processing, undergoes age-dependent proteolytical cleavage at the C-terminus.

It localises to the cytoplasm. Its subcellular location is the nucleus. In terms of biological role, contributes to the transparency and refractive index of the lens. Acts as a chaperone, preventing aggregation of various proteins under a wide range of stress conditions. Required for the correct formation of lens intermediate filaments as part of a complex composed of BFSP1, BFSP2 and CRYAA. This Halichoerus grypus (Gray seal) protein is Alpha-crystallin A chain (CRYAA).